Here is a 109-residue protein sequence, read N- to C-terminus: Small ribosomal subunit protein uS15c (109 aa).

This sequence belongs to the universal ribosomal protein uS15 family. Part of the 30S ribosomal subunit.

Its subcellular location is the plastid. It is found in the chloroplast. In Trachelium caeruleum (Blue throatwort), this protein is Small ribosomal subunit protein uS15c (rps15-A).